A 1483-amino-acid chain; its full sequence is Heme-responsive zinc finger transcription factor HAP1 (1483 aa).

A compositionally biased stretch (polar residues) spans 1 to 50; the sequence is MSNTPYNSSVPSIASMTQSSVSRSPNMHTATTPGANTSSNSPPLHMSSDS. The tract at residues 1–56 is disordered; the sequence is MSNTPYNSSVPSIASMTQSSVSRSPNMHTATTPGANTSSNSPPLHMSSDSSKIKRK. 6 residues coordinate Zn(2+): Cys-64, Cys-67, Cys-74, Cys-81, Cys-84, and Cys-93. Residues 64–93 constitute a DNA-binding region (zn(2)-C6 fungal-type); the sequence is CTICRKRKVKCDKLRPHCQQCTKTGVAHLC. Positions 105-134 form a coiled coil; that stretch reads EKELLKDNELKKLRERVKSLEKTLSKVHSS. Positions 162–176 are enriched in polar residues; that stretch reads VNANTGSASSASHMH. The disordered stretch occupies residues 162 to 208; it reads VNANTGSASSASHMHQQQQQQQQQEQQQDFSRSANANANSSSLSISN. A compositionally biased stretch (low complexity) spans 177–208; the sequence is QQQQQQQQQEQQQDFSRSANANANSSSLSISN. A heme-responsive; required for HMC formation region spans residues 244–444; sequence KGDPYLKLLW…NTIPHHQPQS (201 aa). HRM repeat units follow at residues 280–285, 299–304, 323–328, 347–352, 389–394, and 415–420; these read KCPINH, KCPVDH, RCPVDH, and RCPIDH. Polar residues-rich tracts occupy residues 432-447 and 706-734; these read STHN…SGSH and QLNA…NPTL. Disordered stretches follow at residues 432–458 and 706–767; these read STHN…NRKH and QLNA…KENQ. Residues 735–759 are compositionally biased toward low complexity; the sequence is NNNMSAATTNSSSRSGSADSRSGSN. The stretch at 1192–1197 is one HRM 7 repeat; sequence KCPVYQ. Positions 1384–1411 are disordered; sequence TANTDTSANGSALSTLTSPQGSDLASNS. Positions 1388–1411 are enriched in polar residues; sequence DTSANGSALSTLTSPQGSDLASNS.

As to quaternary structure, binds DNA as a homodimer. Interacts with SRO9 and YDJ1. In the absence of heme, binds to at least four cellular proteins, including YDJ1 and SRO9, forming a high-molecular-weight complex (HMC) which results in repression of its activity and dictates its DNA-binding specificity.

Its subcellular location is the nucleus. Its function is as follows. Regulation of oxygen dependent gene expression. It modulates the expression of Iso-1 (CYP1) and Iso-2 (CYP3) cytochrome c. In response to heme, promotes transcription of genes encoding functions required for respiration, controlling oxidative damage and repression of anaerobic genes. Binds to the sequence 5'-CGGNNNTNNCGG-3'. The polypeptide is Heme-responsive zinc finger transcription factor HAP1 (HAP1) (Saccharomyces cerevisiae (strain RM11-1a) (Baker's yeast)).